The primary structure comprises 119 residues: Holo-[acyl-carrier-protein] synthase (119 aa).

The Mg(2+) site is built by Asp-8 and Glu-58.

The protein belongs to the P-Pant transferase superfamily. AcpS family. The cofactor is Mg(2+).

The protein localises to the cytoplasm. The enzyme catalyses apo-[ACP] + CoA = holo-[ACP] + adenosine 3',5'-bisphosphate + H(+). Its function is as follows. Transfers the 4'-phosphopantetheine moiety from coenzyme A to a Ser of acyl-carrier-protein. The chain is Holo-[acyl-carrier-protein] synthase from Streptococcus thermophilus (strain CNRZ 1066).